Consider the following 206-residue polypeptide: Large ribosomal subunit protein uL4 (206 aa).

Residues 43–78 (NQRQGTHDTKTRAEVRGGGRKPWRQKGTGRARAGSS) are disordered. The segment covering 47–59 (GTHDTKTRAEVRG) has biased composition (basic and acidic residues). A compositionally biased stretch (basic residues) spans 60–71 (GGRKPWRQKGTG).

It belongs to the universal ribosomal protein uL4 family. As to quaternary structure, part of the 50S ribosomal subunit.

Its function is as follows. One of the primary rRNA binding proteins, this protein initially binds near the 5'-end of the 23S rRNA. It is important during the early stages of 50S assembly. It makes multiple contacts with different domains of the 23S rRNA in the assembled 50S subunit and ribosome. In terms of biological role, forms part of the polypeptide exit tunnel. This is Large ribosomal subunit protein uL4 from Desulforamulus reducens (strain ATCC BAA-1160 / DSM 100696 / MI-1) (Desulfotomaculum reducens).